The chain runs to 111 residues: MAQIQFARGLVEDAIPTIRLTRSRTGDSGTATFYFESPNIFADEQTQEVTGMYLIDSEGEIVSREVKGKFINGKPHAIEAILIMNSPDEWERFMRFMERYAQEHGLEFTKA.

Belongs to the Psb28 family. Part of the photosystem II complex.

The protein resides in the cellular thylakoid membrane. The chain is Photosystem II reaction center Psb28 protein from Gloeothece citriformis (strain PCC 7424) (Cyanothece sp. (strain PCC 7424)).